Here is a 182-residue protein sequence, read N- to C-terminus: Small ribosomal subunit protein uS9 (182 aa).

Belongs to the universal ribosomal protein uS9 family.

This chain is Small ribosomal subunit protein uS9, found in Corynebacterium efficiens (strain DSM 44549 / YS-314 / AJ 12310 / JCM 11189 / NBRC 100395).